A 376-amino-acid chain; its full sequence is Gibberellin 20 oxidase 4 (376 aa).

Positions Asp222–Pro322 constitute a Fe2OG dioxygenase domain. His247, Asp249, and His303 together coordinate Fe cation. Arg313 is an active-site residue.

It belongs to the iron/ascorbate-dependent oxidoreductase family. GA20OX subfamily. Requires Fe(2+) as cofactor. L-ascorbate serves as cofactor. Expressed in roots. Detected in leaves, inflorescences and siliques, but not in stems and dry seeds.

The enzyme catalyses gibberellin A12 + 2 2-oxoglutarate + 3 O2 + H(+) = gibberellin A9 + 2 succinate + 3 CO2 + 2 H2O. It carries out the reaction gibberellin A53 + 2 2-oxoglutarate + 3 O2 + H(+) = gibberellin A20 + 2 succinate + 3 CO2 + 2 H2O. It functions in the pathway plant hormone biosynthesis; gibberellin biosynthesis. Key oxidase enzyme in the biosynthesis of gibberellin that catalyzes the conversion of GA12 and GA53 to GA9 and GA20 respectively, via a three-step oxidation at C-20 of the GA skeleton. The sequence is that of Gibberellin 20 oxidase 4 (GA20OX4) from Arabidopsis thaliana (Mouse-ear cress).